Reading from the N-terminus, the 485-residue chain is Calcium/manganese antiporter SLC30A10 (485 aa).

Topologically, residues 1–10 (MGRYSGKTCR) are cytoplasmic. A helical transmembrane segment spans residues 11 to 31 (LLFMLVLTVAFFVAELVSGYL). Topologically, residues 32 to 40 (GNSIALLSD) are extracellular. A helical membrane pass occupies residues 41–61 (SFNMLSDLISLCVGLSAGYIA). The Cytoplasmic portion of the chain corresponds to 62-81 (RRPTRGFSATYGYARAEVVG). Residues 82–102 (ALSNAVFLTALCFTIFVEAVL) form a helical membrane-spanning segment. At 103 to 113 (RLARPERIDDP) the chain is on the extracellular side. The helical transmembrane segment at 114–134 (ELVLIVGVLGLLVNVVGLLIF) threads the bilayer. Over 135–244 (QDCAAWFACC…ALNIRGVLLH (110 aa)) the chain is Cytoplasmic. The tract at residues 167–196 (FGGPQGAEDPRRAADPTAPGSDSAVTLRGT) is disordered. Residues 245–265 (VMGDALGSVVVVITAIIFYVL) form a helical membrane-spanning segment. The Extracellular portion of the chain corresponds to 266 to 278 (PLKSEDPCNWQCY). The chain crosses the membrane as a helical span at residues 279–299 (IDPSLTVLMVIIILSSAFPLI). The Cytoplasmic segment spans residues 300–485 (KETAAILLQM…DQCYVNRTHF (186 aa)). The required for plasma membrane localization stretch occupies residues 308–485 (QMVPKGVNME…DQCYVNRTHF (178 aa)).

This sequence belongs to the cation diffusion facilitator (CDF) transporter (TC 2.A.4) family. SLC30A subfamily. As to quaternary structure, forms homodimers. Forms heterodimers and high-molecular weight oligomers with SLC30A3, SLC30A2 and SLC30A4; heterodimerization is mediated by covalent-bound tyrosine residues, occurs probably in a tissue-specific manner and could mediate the intracellular zinc transport activity into early endosomes and recycling endosomes. As to expression, specifically expressed in fetal liver and fetal brain. Expressed in adult tissues with relative levels small intestine &gt; liver &gt; testes &gt; brain &gt; ovary &gt; colon &gt; cervix &gt; prostate &gt; placenta. Expressed in liver and neurons of the nervous system (at protein level).

The protein localises to the cell membrane. It is found in the golgi apparatus membrane. It localises to the recycling endosome membrane. The protein resides in the early endosome membrane. It carries out the reaction Mn(2+)(out) + Ca(2+)(in) = Mn(2+)(in) + Ca(2+)(out). The catalysed reaction is Zn(2+)(in) = Zn(2+)(out). Its function is as follows. Calcium:manganese antiporter of the plasma membrane mediating the efflux of intracellular manganese coupled to an active extracellular calcium exchange. Required for intracellular manganese homeostasis, an essential cation for the function of several enzymes, including some crucially important for the metabolism of neurotransmitters and other neuronal metabolic pathways. Manganese can also be cytotoxic and induce oxidative stress, mitochondrial dysfunction and apoptosis. Could also have an intracellular zinc ion transporter activity, directly regulating intracellular zinc ion homeostasis and more indirectly various signaling pathway and biological processes. This is Calcium/manganese antiporter SLC30A10 from Homo sapiens (Human).